We begin with the raw amino-acid sequence, 559 residues long: Glucosylglycerate phosphorylase (559 aa).

Asp229 (nucleophile) is an active-site residue.

The protein belongs to the glycosyl hydrolase 13 family. Glucosylglycerate phosphorylase subfamily.

It catalyses the reaction (2R)-2-O-(alpha-D-glucopyranosyl)-glycerate + phosphate = (R)-glycerate + alpha-D-glucose 1-phosphate. In terms of biological role, catalyzes the reversible phosphorolysis of glucosylglycerate into alpha-D-glucose 1-phosphate (Glc1P) and D-glycerate (also called (R)-glycerate). May be a regulator of intracellular levels of glucosylglycerate, a compatible solute that primarily protects organisms facing salt stress and very specific nutritional constraints. Cannot catalyze the phosphorolysis of sucrose. Does not act on other sugars such as alpha-D-galactose 1-phosphate, alpha-D-mannose 1-phosphate or beta-D-glucose 1-phosphate; in vitro D-erythronate can substitute for D-glycerate with a much lower efficiency. The chain is Glucosylglycerate phosphorylase (ycjM) from Escherichia coli (strain K12).